The primary structure comprises 78 residues: MKLIIFTGLALLLIVSLIDVEAQNEGACLPRGSVCTTNHAGCCSKLSCDCYRRFEKGVEKGQKCWCIPTGLRYSKEKE.

The N-terminal stretch at 1-22 (MKLIIFTGLALLLIVSLIDVEA) is a signal peptide. Residues 23–26 (QNEG) constitute a propeptide that is removed on maturation.

Belongs to the neurotoxin 19 (CSTX) family. 07 (U7-Lctx) subfamily. Post-translationally, contains 4 disulfide bonds. In terms of tissue distribution, expressed by the venom gland.

It localises to the secreted. This Lycosa singoriensis (Wolf spider) protein is U7-lycotoxin-Ls1a.